Consider the following 556-residue polypeptide: 2-isopropylmalate synthase (556 aa).

Residues 33-307 form the Pyruvate carboxyltransferase domain; that stretch reads PIWCSSDLRD…HPQLDFSDID (275 aa). Residues D42, H246, H248, and N282 each contribute to the Mg(2+) site. The segment at 439 to 556 is regulatory domain; that stretch reads ATSPYALASH…AVTQAEAKAA (118 aa).

This sequence belongs to the alpha-IPM synthase/homocitrate synthase family. LeuA type 2 subfamily. As to quaternary structure, homodimer. Mg(2+) serves as cofactor.

It is found in the cytoplasm. It carries out the reaction 3-methyl-2-oxobutanoate + acetyl-CoA + H2O = (2S)-2-isopropylmalate + CoA + H(+). The protein operates within amino-acid biosynthesis; L-leucine biosynthesis; L-leucine from 3-methyl-2-oxobutanoate: step 1/4. Functionally, catalyzes the condensation of the acetyl group of acetyl-CoA with 3-methyl-2-oxobutanoate (2-ketoisovalerate) to form 3-carboxy-3-hydroxy-4-methylpentanoate (2-isopropylmalate). The chain is 2-isopropylmalate synthase from Pseudomonas paraeruginosa (strain DSM 24068 / PA7) (Pseudomonas aeruginosa (strain PA7)).